Here is a 333-residue protein sequence, read N- to C-terminus: Cap-specific mRNA (nucleoside-2'-O-)-methyltransferase (333 aa).

Tyr22 is a binding site for mRNA. 8 residues coordinate S-adenosyl-L-methionine: Gln39, Tyr66, Gly68, Gly72, Asp95, Arg97, Val116, and Asp138. The tract at residues 169-249 (PVASSLKWRC…NKIVRNKVVV (81 aa)) is binding to NPH-I. The interval 169–333 (PVASSLKWRC…NSKRSVRSNK (165 aa)) is binding to Rap94. Lys175 functions as the For methyltransferase activity in the catalytic mechanism. Residues 177 to 180 (RCPF), Asp182, 205 to 207 (SAE), and Glu233 each bind mRNA. Residues 305-333 (SHEPIQRKISSKNSMSKNRNSKRSVRSNK) form a disordered region. Low complexity predominate over residues 311-322 (RKISSKNSMSKN). The span at 323–333 (RNSKRSVRSNK) shows a compositional bias: basic residues.

This sequence belongs to the class I-like SAM-binding methyltransferase superfamily. Poxvirus/kinetoplastid 2'-O-MTase family. As to quaternary structure, interacts with poly(A) polymerase catalytic subunit OPG063. Interacts with OPG109 and OPG123; these interactions might help linking transcription to capping and polyadenylation.

The protein localises to the virion. It catalyses the reaction a 5'-end (N(7)-methyl 5'-triphosphoguanosine)-ribonucleoside in mRNA + S-adenosyl-L-methionine = a 5'-end (N(7)-methyl 5'-triphosphoguanosine)-(2'-O-methyl-ribonucleoside) in mRNA + S-adenosyl-L-homocysteine + H(+). Functionally, displays methyltransferase, positive regulation of the poly(A) polymerase and transcription elongation activities. Involved in the modification of both mRNA ends and in intermediate and late gene positive transcription elongation. At the mRNAs 5' end, methylates the ribose 2' OH group of the first transcribed nucleotide, thereby producing a 2'-O-methylpurine cap. At the 3' end, functions as a processivity factor which stimulates the activity of the viral poly(A) polymerase OPG063 that creates mRNA's poly(A) tail. In the presence of OPG102, OPG063 does not dissociate from the RNA allowing tail elongation to around 250 adenylates. The polypeptide is Cap-specific mRNA (nucleoside-2'-O-)-methyltransferase (OPG102) (Vaccinia virus (strain Western Reserve) (VACV)).